The chain runs to 566 residues: Protein pacG (566 aa).

A DNA-binding region (NDT80) is located at residues 79–326; that stretch reads TSFDPPPPAE…RSPRNFQSRK (248 aa). Disordered stretches follow at residues 314 to 422 and 448 to 470; these read VRGR…EAHR and DSRP…DSGR. A compositionally biased stretch (low complexity) spans 333–349; the sequence is SAAASRKNAQAAAASNN. Composition is skewed to polar residues over residues 365–391, 403–413, and 452–466; these read VKSS…ATNS, HSSVYSQSSPE, and HTSF…SLSV.

Its subcellular location is the nucleus. It is found in the cytoplasm. Functionally, transcription factor that acts as a positive regulator of nonrepressible acid phosphatase activity. Is a major regulator of responses to nitrogen and carbon starvation and is essential for the expression of genes involved in vegetative incompatibility (like pin-c, het-6, and tol). Vegetative incompatibility is a non-self-recognition system ubiquitous in filamentous fungi which results in programmed cell death. The chain is Protein pacG (pacG) from Emericella nidulans (strain FGSC A4 / ATCC 38163 / CBS 112.46 / NRRL 194 / M139) (Aspergillus nidulans).